We begin with the raw amino-acid sequence, 583 residues long: Atlastin-2 (583 aa).

A disordered region spans residues 1–44 (MAEGDEAARGQQPHQGLWRRRRTSDPSAAVNHVSSTTSLGENYE). An N-terminal hypervariable region (HVR) region spans residues 1-60 (MAEGDEAARGQQPHQGLWRRRRTSDPSAAVNHVSSTTSLGENYEDDDLVNSDEVMKKPCP). Over 1-476 (MAEGDEAARG…NIFYAARTPA (476 aa)) the chain is Cytoplasmic. The residue at position 24 (serine 24) is a Phosphoserine. The 246-residue stretch at 91–336 (DLNIVVVSVA…LVPLLLAPEN (246 aa)) folds into the GB1/RHD3-type G domain. The GDP site is built by arginine 104, lysine 105, glycine 106, lysine 107, serine 108, phenylalanine 109, glutamine 175, arginine 244, and aspartate 245. 6 residues coordinate GTP: arginine 104, lysine 105, glycine 106, lysine 107, serine 108, and phenylalanine 109. Serine 108 is a Mg(2+) binding site. GTP contacts are provided by arginine 244 and aspartate 245. Positions 256–284 (LEGGKQFLEKRLQVKQNQHEELQNVRKHI) form a coiled coil. Lysine 270 carries the post-translational modification N6-methyllysine. GDP contacts are provided by valine 303 and asparagine 306. Residue valine 303 coordinates GTP. The interval 374-465 (MLQATAEANN…YANFIKHNDG (92 aa)) is 3HB (three-helix bundle) domain. A linker region spans residues 466–474 (KNIFYAART). The helical transmembrane segment at 477 to 497 (TLFAVMFAMYIISGLTGFIGL) threads the bilayer. Topologically, residues 498–499 (NS) are lumenal. A helical membrane pass occupies residues 500-520 (IAVLCNLVMGLALIFLCTWAY). Topologically, residues 521–583 (VKYSGEFREI…VSHHARLKTD (63 aa)) are cytoplasmic. Positions 547 to 583 (KPLGDNLMEENIRQSVTNSIKAGLTDQVSHHARLKTD) are autoinhibitory domain.

The protein belongs to the TRAFAC class dynamin-like GTPase superfamily. GB1/RHD3 GTPase family. GB1 subfamily. Monomeric and homodimeric. The homodimer, transiently formed by two molecules on opposing membranes, is the active form mediating ER membrane fusion. Interacts with REEP5 and RTN3; these proteins are involved in endoplasmic reticulum tubular network organization. Interacts with ZFYVE27; both proteins are involved in endoplasmic reticulum tubular network organization. As to expression, expressed in peripheral tissues (at protein level).

Its subcellular location is the endoplasmic reticulum membrane. It catalyses the reaction GTP + H2O = GDP + phosphate + H(+). With its alternative C-terminus disrupting the autoinhibitory domain, this brain-specific isoform is probably more active at fusing ER membranes. Atlastin-2 (ATL2) is a membrane-anchored GTPase that mediates the GTP-dependent fusion of endoplasmic reticulum (ER) membranes, maintaining the continuous ER network. It facilitates the formation of three-way junctions where ER tubules intersect. Two atlastin-2 on neighboring ER tubules bind GTP and form loose homodimers through the GB1/RHD3-type G domains and 3HB regions. Upon GTP hydrolysis, the 3HB regions tighten, pulling the membranes together to drive their fusion. After fusion, the homodimer disassembles upon release of inorganic phosphate (Pi). Subsequently, GDP dissociates, resetting the monomers to a conformation ready for a new fusion cycle. In Homo sapiens (Human), this protein is Atlastin-2.